The primary structure comprises 396 residues: Na(+)/H(+) antiporter NhaA 1 (396 aa).

Transmembrane regions (helical) follow at residues 9–29 (LHNEAASGVLIFLAAVAAMLI), 59–79 (LLLWINDGLMAVFFLLVGLEL), 95–115 (VLPVVGAVGGIVGPALIYVMF), 125–145 (GWAVPTATDIAFAMGVLALLG), 154–174 (LFLLTLAIIDDLVAIVIIAIF), 177–197 (SDLSVGSLTVAGGAIALLFLL), 200–220 (IGVKGIAPYVLVGMVLWVAVL), 223–243 (GVHATLAGVVLAMAIPIKGET), 260–280 (VVGLVILPLFAFANAGVSLAG), 281–301 (LGLNVLLEPVAMGIGLGLLLG), 332–352 (GVALLCGIGFTMSLFISSLAF), and 373–393 (ILSGSLVSGVLGYLVLRFSLA).

Belongs to the NhaA Na(+)/H(+) (TC 2.A.33) antiporter family.

The protein localises to the cell inner membrane. The enzyme catalyses Na(+)(in) + 2 H(+)(out) = Na(+)(out) + 2 H(+)(in). Functionally, na(+)/H(+) antiporter that extrudes sodium in exchange for external protons. The polypeptide is Na(+)/H(+) antiporter NhaA 1 (Magnetococcus marinus (strain ATCC BAA-1437 / JCM 17883 / MC-1)).